A 250-amino-acid polypeptide reads, in one-letter code: Probable syntaxin-8B (250 aa).

Residues 1-213 (MGDYWLNEHD…NRRMETIKQN (213 aa)) lie on the Cytoplasmic side of the membrane. The stretch at 73 to 100 (EKELLRRKNKVESLISMKNQLNSTLDAA) forms a coiled coil. Residues 148–210 (QHIMREQDES…RNANRRMETI (63 aa)) enclose the t-SNARE coiled-coil homology domain. The chain crosses the membrane as a helical; Anchor for type IV membrane protein span at residues 214–234 (AGSTCMIVCIVILIILIVVLI). The Vesicular portion of the chain corresponds to 235–250 (ATDSGCKIYNDPKHCP).

It belongs to the syntaxin family.

It is found in the membrane. The polypeptide is Probable syntaxin-8B (syn8B) (Dictyostelium discoideum (Social amoeba)).